Consider the following 609-residue polypeptide: Leukotriene A-4 hydrolase (609 aa).

Residues 131-133 and 263-268 contribute to the a peptide site; these read QCQ and PYGGME. His292 serves as a coordination point for Zn(2+). Glu293 functions as the Proton acceptor in the catalytic mechanism. Zn(2+) is bound by residues His296 and Glu315. The active-site Proton donor is Tyr380. 560-562 lines the a peptide pocket; it reads RMK.

The protein belongs to the peptidase M1 family. In terms of assembly, homodimer. Zn(2+) serves as cofactor. In terms of tissue distribution, expressed in oocytes.

It localises to the cytoplasm. It catalyses the reaction Release of the N-terminal residue from a tripeptide.. The enzyme catalyses leukotriene A4 + H2O = leukotriene B4. It participates in lipid metabolism; leukotriene B4 biosynthesis. With respect to regulation, the epoxide hydrolase activity is mildly restrained by suicide inactivation, possibly involving binding of LTA4 to Tyr-380. In terms of biological role, bifunctional zinc metalloenzyme that comprises both epoxide hydrolase (EH) and aminopeptidase activities. Acts as an epoxide hydrolase to catalyze the conversion of leukotriene A4 (LTA4) to the pro-inflammatory mediator leukotriene B4 (LTB4). During the conversion of LTA4 to LTB4, a second product is formed, the isomeric delta6-trans-delta8-cis-LTB4 (5S,12R-dihydroxy-6,10-trans-8,14-cis-eicosatetraenoic acid), with a relative formation of 10% delta6-trans-delta8-cis-LTB4 compared to 90% LTB4. The production of delta6-trans-delta8-cis-LTB4 seems to depend on the phenylalanine residue at position 375. Also has aminopeptidase activity. In Xenopus laevis (African clawed frog), this protein is Leukotriene A-4 hydrolase.